Reading from the N-terminus, the 907-residue chain is Protein translocase subunit SecA (907 aa).

Residues Gln-87, 105-109, and Asp-512 each bind ATP; that span reads GEGKT. The segment at 869–897 is disordered; it reads AESLSAHTPVVREGEKVGRNDPCPCGSGR. A compositionally biased stretch (basic and acidic residues) spans 878 to 887; the sequence is VVREGEKVGR. Zn(2+)-binding residues include Cys-891, Cys-893, Cys-902, and His-903.

The protein belongs to the SecA family. As to quaternary structure, monomer and homodimer. Part of the essential Sec protein translocation apparatus which comprises SecA, SecYEG and auxiliary proteins SecDF-YajC and YidC. Requires Zn(2+) as cofactor.

It is found in the cell inner membrane. The protein resides in the cytoplasm. It catalyses the reaction ATP + H2O + cellular proteinSide 1 = ADP + phosphate + cellular proteinSide 2.. Its function is as follows. Part of the Sec protein translocase complex. Interacts with the SecYEG preprotein conducting channel. Has a central role in coupling the hydrolysis of ATP to the transfer of proteins into and across the cell membrane, serving both as a receptor for the preprotein-SecB complex and as an ATP-driven molecular motor driving the stepwise translocation of polypeptide chains across the membrane. The sequence is that of Protein translocase subunit SecA from Shewanella sediminis (strain HAW-EB3).